A 2297-amino-acid chain; its full sequence is Xin actin-binding repeat-containing protein 1 (2297 aa).

Positions 1 to 11 (MAEVAKQKKAT) are enriched in basic and acidic residues. Residues 1 to 28 (MAEVAKQKKATEAVCGDEDFPPPPPPLP) form a disordered region. Xin repeat units follow at residues 104–119 (GEVQ…WTLD), 139–154 (GDVK…STFD), 169–184 (GDVR…QPLD), 208–223 (GDVT…KPLD), 248–263 (GDVK…DPCC), 286–301 (SDFK…QPLD), 323–338 (GGVD…QPLD), 362–377 (ADVH…QPLS), and 396–411 (GNVG…QPMD). Residues 433–442 (GEVQDKRMQF) show a composition bias toward basic and acidic residues. Residues 433–461 (GEVQDKRMQFEKSTAGKTAGDSGNKVQND) form a disordered region. 14 Xin repeats span residues 464-479 (GDVK…LPLN), 494-509 (GDVK…TPLY), 532-547 (GNVQ…RPLD), 570-585 (DDTR…QPLD), 605-620 (SNVK…KPMD), 638-653 (ADVK…QPLD), 677-692 (VNVK…EPLD), 715-730 (GDVS…KSLG), 747-762 (GSVH…QPIG), 779-794 (GDVG…LSLD), 818-833 (VNVK…QPLY), 856-871 (GDVR…KPLD), 893-908 (GDVK…QPLD), and 928-943 (KCVQ…EQAS). Phosphoserine is present on serine 952. 3 Xin repeats span residues 959 to 974 (GDVR…QPID), 997 to 1012 (GDVK…QSLD), and 1033 to 1048 (ADVK…TPLD). 4 disordered regions span residues 1617–1680 (PSSH…KDQK), 1866–1900 (KENI…VPSI), 2147–2191 (SAAR…PRRK), and 2243–2297 (ELSS…TEKH). 2 stretches are compositionally biased toward low complexity: residues 1618–1630 (SSHT…VSVT) and 1644–1656 (SVSS…KNSS). 2 stretches are compositionally biased toward basic and acidic residues: residues 1876–1885 (SNKDELHFTS) and 2151–2162 (KPAESPTDKPKT). Residues 2166-2180 (QSNAGSSSSQNSSAS) are compositionally biased toward low complexity. Residues 2259-2278 (GMTSPVLQRSGQSFSSNSLS) are compositionally biased toward polar residues.

This sequence belongs to the Xin family. As to expression, expressed at intercalated disks in the heart (at protein level).

The protein localises to the cell junction. It is found in the adherens junction. It localises to the desmosome. In terms of biological role, positively regulates organization of the outer plexiform layer and Muller glia cells in the retina. May protect actin filaments from depolymerization. May play a role in development of normal skeletal muscle morphology and muscle fiber type composition. The chain is Xin actin-binding repeat-containing protein 1 from Danio rerio (Zebrafish).